A 260-amino-acid chain; its full sequence is NH(3)-dependent NAD(+) synthetase (260 aa).

Residue 31 to 38 coordinates ATP; that stretch reads GLSGGLDS. Aspartate 37 lines the Mg(2+) pocket. Position 112 (arginine 112) interacts with deamido-NAD(+). Threonine 132 contributes to the ATP binding site. Residue glutamate 137 participates in Mg(2+) binding. Residues lysine 161 and serine 183 each contribute to the ATP site.

The protein belongs to the NAD synthetase family. In terms of assembly, homodimer.

It carries out the reaction deamido-NAD(+) + NH4(+) + ATP = AMP + diphosphate + NAD(+) + H(+). It functions in the pathway cofactor biosynthesis; NAD(+) biosynthesis; NAD(+) from deamido-NAD(+) (ammonia route): step 1/1. Catalyzes the ATP-dependent amidation of deamido-NAD to form NAD. Uses ammonia as a nitrogen source. This Helicobacter pylori (strain ATCC 700392 / 26695) (Campylobacter pylori) protein is NH(3)-dependent NAD(+) synthetase.